Consider the following 219-residue polypeptide: MDRDAAHAALRRRLAETHLRAEIYKDQTLQLHREGVSTQDPRFVGAFMAAKAAHLELEARLKSRARLEMMRQRATCVKIRVEEQAARRDFLTAHRRYLDPALGERLDAVDDRLADQEEQLEEAATNASLWGDGDLAEGWMSPADSDLLVMWQLTSAPKVHANGPSRIGSHPTYTPTPTGPPGAPAAPLSRTPPSPAPPTGPATDPASASGFARDYPDGE.

A disordered region spans residues 161–219; that stretch reads ANGPSRIGSHPTYTPTPTGPPGAPAAPLSRTPPSPAPPTGPATDPASASGFARDYPDGE. Over residues 177 to 200 the composition is skewed to pro residues; the sequence is PTGPPGAPAAPLSRTPPSPAPPTG.

The protein belongs to the alphaherpesvirinae HHV-1 UL14 protein family. In terms of assembly, interacts with UL51. Phosphorylated.

The protein resides in the virion tegument. It is found in the host cytoplasm. Its subcellular location is the host nucleus. Contributes to the nuclear transport of the viral transcriptional activator VP16 during the early phase of infection. Therefore, participates indirectly in the regulation of the immediate-early gene expression. Additionally, seems to be important for efficient nuclear targeting of capsids. The UL51-UL14 complex regulates final viral envelopment for efficient viral replication. This is Tegument protein UL14 from Human herpesvirus 1 (strain 17) (HHV-1).